Reading from the N-terminus, the 141-residue chain is Large ribosomal subunit protein uL11 (141 aa).

Belongs to the universal ribosomal protein uL11 family. In terms of assembly, part of the ribosomal stalk of the 50S ribosomal subunit. Interacts with L10 and the large rRNA to form the base of the stalk. L10 forms an elongated spine to which L12 dimers bind in a sequential fashion forming a multimeric L10(L12)X complex. One or more lysine residues are methylated.

In terms of biological role, forms part of the ribosomal stalk which helps the ribosome interact with GTP-bound translation factors. The protein is Large ribosomal subunit protein uL11 of Clostridioides difficile (strain 630) (Peptoclostridium difficile).